The sequence spans 455 residues: MSNDKAATSTNFNLTPNRERIFQELSELISHYSPHSMPEHADTHEEAAKWVTAKLEELGLDVTRHPTVDDADTIIGVKEPVGDAPTILLYSHYDVVPAQNPAVWTNDPLELDERDGRWYGRGAADCKGNVIMHLEALRMVQENGGTDLGLKVVMEGSEELGGEDGLGKLIDANPELFTADVIFIGDGGNVAVGIPTLTTHLRGGAQLRFKVDTLEGPVHSGGWGGAAPDAAHALIRIIDSFFDEHGRTTIEGVDTTAKWEGDPYDRETFRKDARVLDGVQLLGTVDDEPADMVWARPAITVIGFTSVPVEDATNIVNPTAEAQFNLRVPAPQSAAEVAKKVEEQIRARAPWGAKVEVSITGVNEPFSTDPNGPAVQHFGKCLQDAYGAEHLTVVGTGGSIPLTVTLQKHFPDAEFALYGVADPAANIHGVDESVDPTEIEHVAIAEAEFLLTYGK.

His-92 lines the Zn(2+) pocket. Asp-94 is an active-site residue. Asp-125 lines the Zn(2+) pocket. Catalysis depends on Glu-158, which acts as the Proton acceptor. Residues Glu-159, Glu-163, and His-428 each contribute to the Zn(2+) site.

The protein belongs to the peptidase M20F family. Zn(2+) serves as cofactor.

It carries out the reaction an S-substituted L-cysteinylglycine + H2O = an S-substituted L-cysteine + glycine. The enzyme catalyses S-(1-hydroxy-3-methylhexan-3-yl)-L-cysteinylglycine + H2O = S-(1-hydroxy-3-methylhexan-3-yl)-L-cysteine + glycine. The catalysed reaction is S-benzyl-L-cysteinylglycine + H2O = S-benzyl-L-cysteine + glycine. Metallopeptidase that hydrolyzes the Cys-Gly bond of Cys-Gly-S-conjugates. Involved in the formation of the human body odorant 3-methyl-3-sulfanylhexan-1-ol (3M3SH) from odorless axilla secretions. Catalyzes the hydrolysis of the Cys-Gly bond of the Cys-Gly-S-conjugate of 3M3SH, a key precursor secreted by apocrine glands in human axilla skin. The Cys-S-conjugate obtained is then cleaved by the Cys-S-conjugate beta-lyase MetC, which finally releases 3M3SH. In Corynebacterium striatum, this protein is Cysteinylglycine-S-conjugate dipeptidase.